We begin with the raw amino-acid sequence, 481 residues long: Cardiolipin synthase A (481 aa).

2 consecutive transmembrane segments (helical) span residues 10–30 (FFGY…LHAL) and 40–60 (IAWA…YLIF). PLD phosphodiesterase domains are found at residues 220–247 (VNFR…GDEY) and 394–421 (QPGF…DNRS). Active-site residues include His-225, Lys-227, Asp-232, His-399, Lys-401, and Asp-406.

Belongs to the phospholipase D family. Cardiolipin synthase subfamily. ClsA sub-subfamily.

It is found in the cell inner membrane. The catalysed reaction is 2 a 1,2-diacyl-sn-glycero-3-phospho-(1'-sn-glycerol) = a cardiolipin + glycerol. Functionally, catalyzes the reversible phosphatidyl group transfer from one phosphatidylglycerol molecule to another to form cardiolipin (CL) (diphosphatidylglycerol) and glycerol. The sequence is that of Cardiolipin synthase A from Pseudomonas putida (strain ATCC 47054 / DSM 6125 / CFBP 8728 / NCIMB 11950 / KT2440).